The sequence spans 409 residues: Arginine deiminase (409 aa).

Residue Cys399 is the Amidino-cysteine intermediate of the active site.

This sequence belongs to the arginine deiminase family.

The protein localises to the cytoplasm. It catalyses the reaction L-arginine + H2O = L-citrulline + NH4(+). It functions in the pathway amino-acid degradation; L-arginine degradation via ADI pathway; carbamoyl phosphate from L-arginine: step 1/2. This chain is Arginine deiminase (arcA), found in Latilactobacillus sakei (Lactobacillus sakei).